Reading from the N-terminus, the 452-residue chain is Pup--protein ligase (452 aa).

Glu9 contacts Mg(2+). Residue Arg53 participates in ATP binding. Tyr55 serves as a coordination point for Mg(2+). Residue Asp57 is the Proton acceptor of the active site. Glu63 contacts Mg(2+). Residues Thr66 and Trp419 each contribute to the ATP site.

The protein belongs to the Pup ligase/Pup deamidase family. Pup-conjugating enzyme subfamily.

It catalyses the reaction ATP + [prokaryotic ubiquitin-like protein]-L-glutamate + [protein]-L-lysine = ADP + phosphate + N(6)-([prokaryotic ubiquitin-like protein]-gamma-L-glutamyl)-[protein]-L-lysine.. The protein operates within protein degradation; proteasomal Pup-dependent pathway. It participates in protein modification; protein pupylation. In terms of biological role, catalyzes the covalent attachment of the prokaryotic ubiquitin-like protein modifier Pup to the proteasomal substrate proteins, thereby targeting them for proteasomal degradation. This tagging system is termed pupylation. The ligation reaction involves the side-chain carboxylate of the C-terminal glutamate of Pup and the side-chain amino group of a substrate lysine. This Mycobacterium leprae (strain Br4923) protein is Pup--protein ligase.